We begin with the raw amino-acid sequence, 760 residues long: MSTVEEDSDTVTVETVNSVTFTQDTDGNLILHCPQNDPDEIDSEDSTEPPHKRLCLSSEDDQSIDDSTPCISVVALPLSENDQSFEVTMTATTEVADDELSEGTVTQIQILQNDQLDEMSPLGTEEVSAVSQAWFTTKEDKDSLTNKGHKWKQGMWSKEEIDILMNNIERYLKARGIKDATEIIFEMSKDERKDFYRTIAWGLNRPLFAVYRRVLRMYDDRNHVGKYTPEEIEKLKELRIKHGNDWATIGAALGRSASSVKDRCRLMKDTCNTGKWTEEEEKRLAEVVHELTSTEPGDIVTQGVSWAAVAERVGTRSEKQCRSKWLNYLNWKQSGGTEWTKEDEINLILRIAELDVADENDINWDLLAEGWSSVRSPQWLRSKWWTIKRQIANHKDVSFPVLIKGLKQLHENQKNNPVLLENKSGSGVPNSNCNSSVQHVQIRVARLEDNTAISPSPMAALQIPVQITHVSSTDSPAASVDSETITLNSGTLQTFEILPSFHLQPTGTPGTYLLQTSSSQGLPLTLTTSPTVTLAAAAPASPEQIIVHALSPEHLLNTSDNVTVQCHTPRVIIQTVATEDITSSISQAELTADSDLHSSDFPEPPDALEADTFPDEIPRPKMTIQPSFNNAHVSKYSDQNSTELMNSVMVRTEEEIADTDLKQEPPSDLASAYVTEDLESPTIVHQVHQTIDDETILIVPSPHGFIQASDGIDAESVLPLTTLTDPIFQHHQEESNIIGSSLGSPVSEDSKDVEDLVNCH.

Residues 1–237 (MSTVEEDSDT…TPEEIEKLKE (237 aa)) form an interaction with CCND2 region. The tract at residues 24–63 (DTDGNLILHCPQNDPDEIDSEDSTEPPHKRLCLSSEDDQS) is disordered. A compositionally biased stretch (acidic residues) spans 37–47 (DPDEIDSEDST). The interval 87 to 170 (VTMTATTEVA…IDILMNNIER (84 aa)) is required for transcriptional activation. A required for DNA-binding region spans residues 87 to 458 (VTMTATTEVA…DNTAISPSPM (372 aa)). The segment at 176–690 (GIKDATEIIF…PTIVHQVHQT (515 aa)) is interaction with CCND1, CCND2 and CCND3. The 39-residue stretch at 225-263 (GKYTPEEIEKLKELRIKHGNDWATIGAALGRSASSVKDR) folds into the Myb-like 1 domain. Residues 268 to 333 (KDTCNTGKWT…KWLNYLNWKQ (66 aa)) form the HTH myb-type domain. Residues 306-329 (WAAVAERVGTRSEKQCRSKWLNYL) constitute a DNA-binding region (H-T-H motif). The Myb-like 2 domain occupies 339 to 388 (WTKEDEINLILRIAELDVADENDINWDLLAEGWSSVRSPQWLRSKWWTIK). The interval 459–760 (AALQIPVQIT…KDVEDLVNCH (302 aa)) is required for transcriptional activation. Disordered regions lie at residues 593-614 (DSDLHSSDFPEPPDALEADTFP) and 738-760 (IGSSLGSPVSEDSKDVEDLVNCH).

Belongs to the DMTF1 family. In terms of assembly, interacts with the D-type cyclins CCND1, CCND2 and CCND3. Interaction with D-type cyclins may modulate transcriptional activation by this protein. Post-translationally, phosphorylated by the cyclin-D2/CDK4, cyclin-D3/CDK4 and cyclin-D2/CDK6 complexes and to a lesser extent by the cyclin-D1/CDK4 complex.

The protein resides in the nucleus. Its function is as follows. Transcriptional activator which activates the CDKN2A/ARF locus in response to Ras-Raf signaling, thereby promoting p53/TP53-dependent growth arrest. Binds to the consensus sequence 5'-CCCG[GT]ATGT-3'. In Rattus norvegicus (Rat), this protein is Cyclin-D-binding Myb-like transcription factor 1 (Dmtf1).